A 1816-amino-acid chain; its full sequence is Kinesin-like protein KIF1B (1816 aa).

S2 carries the post-translational modification N-acetylserine. Residues 5-354 (SVKVAVRVRP…LRYADRAKQI (350 aa)) enclose the Kinesin motor domain. Residue 97-104 (GQTGAGKS) participates in ATP binding. The tract at residues 270-350 (NINKSLTTLG…TLSTLRYADR (81 aa)) is interaction with KIFBP. Positions 431 to 450 (FSTASMGSLTSSPSSCSLNS) are disordered. Residues 432-450 (STASMGSLTSSPSSCSLNS) are compositionally biased toward low complexity. The stretch at 470-512 (GEEAIERLKESEKIIAELNETWEEKLRKTEAIRMEREALLAEM) forms a coiled coil. The 57-residue stretch at 556 to 612 (TRVGQADAERRQDIVLSGAHIKEEHCIFRSERNNTGEVIVTLEPCERSETYVNGKRV) folds into the FHA domain. Residues T647 and T652 each carry the phosphothreonine modification. Positions 672–731 (IDMKQEMEKRLQEMEILYKREKEEADLLLEQQRLDYESKLQALQKQVETRSLAAETTEEE) form a coiled coil. 5 positions are modified to phosphoserine: S1054, S1057, S1416, S1454, and S1487. The segment at 1550–1570 (STTTFESAITPSESSGYDSAD) is disordered. Phosphoserine is present on residues S1573, S1603, S1610, and S1613. A compositionally biased stretch (low complexity) spans 1620–1637 (SVSSFSSSTLTPSSTCPS). Residues 1620-1659 (SVSSFSSSTLTPSSTCPSLVDSRSSSMDQKTPEANSRASS) form a disordered region. Residues 1640–1659 (DSRSSSMDQKTPEANSRASS) show a composition bias toward polar residues. The PH domain occupies 1701–1799 (VVSKKGYLHF…WLYAFNPLLA (99 aa)).

This sequence belongs to the TRAFAC class myosin-kinesin ATPase superfamily. Kinesin family. Unc-104 subfamily. As to quaternary structure, monomer. Interacts with KIFBP; positively regulates KIF1B microtubule motor activity. Interacts (via C-terminus end of the kinesin-motor domain) with CHP1; the interaction occurs in a calcium-dependent manner. Interacts with MADD (via death domain); links this isoform of KIF1B to Rab3-carrying vesicles in anterograde synaptic vesicle transport. As to expression, expressed in the brain with lower expression in testis and liver (at protein level). Strongly expressed in the brain and ovary, with lower expression in lung, kidney, uterus, testis and liver. Isoform 2 is expressed in non-neuronal tissues.

The protein localises to the cytoplasm. Its subcellular location is the cytoskeleton. The protein resides in the cytoplasmic vesicle. It is found in the secretory vesicle. It localises to the synaptic vesicle membrane. The protein localises to the lysosome. It carries out the reaction ATP + H2O + a kinesin associated with a microtubule at position (n) = ADP + phosphate a kinesin associated with a microtubule at position (n+1, toward the plus end).. Functionally, has a plus-end-directed microtubule motor activity and functions as a motor for transport of vesicles and organelles along microtubules. In terms of biological role, has a plus-end-directed microtubule motor activity and functions as a motor for anterograde synaptic vesicle transport along axonal microtubules from the cell body to the presynapse in neuronal cells. Its function is as follows. Has a plus-end-directed microtubule motor activity and functions as a motor for the translocation of lysosomes from perinuclear regions to the cell periphery. This chain is Kinesin-like protein KIF1B, found in Rattus norvegicus (Rat).